The following is a 166-amino-acid chain: Interleukin-3 (166 aa).

The N-terminal stretch at 1 to 26 (MVLASSTTSIHTMLLLLLMLFHLGLQ) is a signal peptide. A glycan (N-linked (GlcNAc...) asparagine) is linked at Asn-42. 2 disulfide bridges follow: Cys-43-Cys-106 and Cys-105-Cys-166. A glycan (N-linked (GlcNAc...) asparagine; partial) is linked at Asn-112. A disordered region spans residues 145-166 (LTSRPPQPASGSVSPNRGTVEC).

Belongs to the IL-3 family. In terms of assembly, monomer. In terms of tissue distribution, activated T-cells, mast cells, natural killer cells.

The protein localises to the secreted. In terms of biological role, cytokine secreted predominantly by activated T-lymphocytes as well as mast cells and osteoblastic cells that controls the production and differentiation of hematopoietic progenitor cells into lineage-restricted cells. Also stimulates mature basophils, eosinophils, and monocytes to become functionally activated. In addition, plays an important role in neural cell proliferation and survival. Participates as well in bone homeostasis and inhibits osteoclast differentiation by preventing NF-kappa-B nuclear translocation and activation. Mechanistically, exerts its biological effects through a receptor composed of IL3RA subunit and a signal transducing subunit IL3RB. Receptor stimulation results in the rapid activation of JAK2 kinase activity leading to STAT5-mediated transcriptional program. Alternatively, contributes to cell survival under oxidative stress in non-hematopoietic systems by activating pathways mediated by PI3K/AKT and ERK. The polypeptide is Interleukin-3 (Il3) (Mus musculus (Mouse)).